Reading from the N-terminus, the 199-residue chain is MKIVLASNNPGKLAELQTMLAPLGVELQRQADLGVGQAAEPFRTFVENALAKARFAAAHTGLPALADDAGLCVDAFGGLPGVDTADYATRFGHARGEANNVRALLEQMQGIDERRAALVSTLVAVRSPDDPEPLIAVGRVVGQITRAPRGSNGFGFDPVLLLPGLGKTFAELPAEVKNAHSHRGRAAQQMLALLRERWL.

7–12 provides a ligand contact to substrate; it reads SNNPGK. Aspartate 68 functions as the Proton acceptor in the catalytic mechanism. Residue aspartate 68 participates in Mg(2+) binding. Residues alanine 69, 154 to 157, lysine 177, and 182 to 183 contribute to the substrate site; these read FGFD and HR.

The protein belongs to the HAM1 NTPase family. As to quaternary structure, homodimer. The cofactor is Mg(2+).

The enzyme catalyses XTP + H2O = XMP + diphosphate + H(+). It carries out the reaction dITP + H2O = dIMP + diphosphate + H(+). The catalysed reaction is ITP + H2O = IMP + diphosphate + H(+). Its function is as follows. Pyrophosphatase that catalyzes the hydrolysis of nucleoside triphosphates to their monophosphate derivatives, with a high preference for the non-canonical purine nucleotides XTP (xanthosine triphosphate), dITP (deoxyinosine triphosphate) and ITP. Seems to function as a house-cleaning enzyme that removes non-canonical purine nucleotides from the nucleotide pool, thus preventing their incorporation into DNA/RNA and avoiding chromosomal lesions. This is dITP/XTP pyrophosphatase from Verminephrobacter eiseniae (strain EF01-2).